A 291-amino-acid polypeptide reads, in one-letter code: Shikimate dehydrogenase (NADP(+)) (291 aa).

Shikimate-binding positions include 26–28 (SLS) and serine 73. Lysine 77 serves as the catalytic Proton acceptor. Shikimate is bound by residues asparagine 98 and aspartate 113. NADP(+) contacts are provided by residues 137–141 (GAGGA) and valine 238. Tyrosine 240 is a shikimate binding site. Glycine 261 contacts NADP(+).

The protein belongs to the shikimate dehydrogenase family. Homodimer.

It catalyses the reaction shikimate + NADP(+) = 3-dehydroshikimate + NADPH + H(+). The protein operates within metabolic intermediate biosynthesis; chorismate biosynthesis; chorismate from D-erythrose 4-phosphate and phosphoenolpyruvate: step 4/7. Its function is as follows. Involved in the biosynthesis of the chorismate, which leads to the biosynthesis of aromatic amino acids. Catalyzes the reversible NADPH linked reduction of 3-dehydroshikimate (DHSA) to yield shikimate (SA). The protein is Shikimate dehydrogenase (NADP(+)) of Listeria monocytogenes serotype 4b (strain F2365).